The chain runs to 507 residues: Probable cytosol aminopeptidase (507 aa).

Mn(2+) is bound by residues K275 and D280. The active site involves K287. Mn(2+) contacts are provided by D298, D357, and E359. Residue R361 is part of the active site.

The protein belongs to the peptidase M17 family. It depends on Mn(2+) as a cofactor.

Its subcellular location is the cytoplasm. It catalyses the reaction Release of an N-terminal amino acid, Xaa-|-Yaa-, in which Xaa is preferably Leu, but may be other amino acids including Pro although not Arg or Lys, and Yaa may be Pro. Amino acid amides and methyl esters are also readily hydrolyzed, but rates on arylamides are exceedingly low.. The catalysed reaction is Release of an N-terminal amino acid, preferentially leucine, but not glutamic or aspartic acids.. Functionally, presumably involved in the processing and regular turnover of intracellular proteins. Catalyzes the removal of unsubstituted N-terminal amino acids from various peptides. The polypeptide is Probable cytosol aminopeptidase (Rhodopirellula baltica (strain DSM 10527 / NCIMB 13988 / SH1)).